The chain runs to 389 residues: Innexin-6 (389 aa).

4 helical membrane-spanning segments follow: residues 36–56 (VVILAVSSALLLSSHFIGDPI), 111–131 (VFALQAFLFYIPRFIWKAMIA), 190–210 (LFYTLSTVWQAVNAWIQFYIL), and 276–296 (LFIFLWFWLVFVAVVSTVNCF).

The protein belongs to the pannexin family.

It is found in the cell membrane. The protein resides in the cell junction. It localises to the gap junction. Structural component of the gap junctions. In Caenorhabditis elegans, this protein is Innexin-6 (inx-6).